Here is a 383-residue protein sequence, read N- to C-terminus: 3-dehydroquinate synthase (383 aa).

NAD(+) contacts are provided by residues 81 to 86 (EGEVSK), 115 to 119 (GVVGD), 139 to 140 (TS), lysine 152, and lysine 161. Zn(2+) contacts are provided by glutamate 194, histidine 256, and histidine 274.

This sequence belongs to the sugar phosphate cyclases superfamily. Dehydroquinate synthase family. Co(2+) serves as cofactor. Zn(2+) is required as a cofactor. The cofactor is NAD(+).

It is found in the cytoplasm. The catalysed reaction is 7-phospho-2-dehydro-3-deoxy-D-arabino-heptonate = 3-dehydroquinate + phosphate. Its pathway is metabolic intermediate biosynthesis; chorismate biosynthesis; chorismate from D-erythrose 4-phosphate and phosphoenolpyruvate: step 2/7. Catalyzes the conversion of 3-deoxy-D-arabino-heptulosonate 7-phosphate (DAHP) to dehydroquinate (DHQ). This is 3-dehydroquinate synthase from Nitrobacter winogradskyi (strain ATCC 25391 / DSM 10237 / CIP 104748 / NCIMB 11846 / Nb-255).